Consider the following 38-residue polypeptide: Photosystem II reaction center protein L (38 aa).

Residues Ser17–Phe37 traverse the membrane as a helical segment.

It belongs to the PsbL family. In terms of assembly, PSII is composed of 1 copy each of membrane proteins PsbA, PsbB, PsbC, PsbD, PsbE, PsbF, PsbH, PsbI, PsbJ, PsbK, PsbL, PsbM, PsbT, PsbX, PsbY, PsbZ, Psb30/Ycf12, at least 3 peripheral proteins of the oxygen-evolving complex and a large number of cofactors. It forms dimeric complexes.

It is found in the plastid. Its subcellular location is the chloroplast thylakoid membrane. Functionally, one of the components of the core complex of photosystem II (PSII). PSII is a light-driven water:plastoquinone oxidoreductase that uses light energy to abstract electrons from H(2)O, generating O(2) and a proton gradient subsequently used for ATP formation. It consists of a core antenna complex that captures photons, and an electron transfer chain that converts photonic excitation into a charge separation. This subunit is found at the monomer-monomer interface and is required for correct PSII assembly and/or dimerization. This chain is Photosystem II reaction center protein L, found in Emiliania huxleyi (Coccolithophore).